Here is a 316-residue protein sequence, read N- to C-terminus: Coiled-coil domain-containing protein 42 (316 aa).

Coiled-coil stretches lie at residues 39–146 (SPSI…SAKL) and 178–232 (LVSM…DRAR).

The protein belongs to the CFAP73 family. Interacts with ODF1 and ODF2. Interacts with CCDC38. Interacts with CCDC146. Interacts with CFAP53.

The protein resides in the cytoplasm. Its subcellular location is the perinuclear region. The protein localises to the cytoskeleton. It is found in the cell projection. It localises to the cilium. The protein resides in the flagellum. Its subcellular location is the microtubule organizing center. The protein localises to the centrosome. Its function is as follows. Essential for male fertility. Required for sperm development. In Homo sapiens (Human), this protein is Coiled-coil domain-containing protein 42.